Consider the following 872-residue polypeptide: Alanine--tRNA ligase (872 aa).

The Zn(2+) site is built by His566, His570, Cys668, and His672.

This sequence belongs to the class-II aminoacyl-tRNA synthetase family. Requires Zn(2+) as cofactor.

The protein localises to the cytoplasm. The enzyme catalyses tRNA(Ala) + L-alanine + ATP = L-alanyl-tRNA(Ala) + AMP + diphosphate. In terms of biological role, catalyzes the attachment of alanine to tRNA(Ala) in a two-step reaction: alanine is first activated by ATP to form Ala-AMP and then transferred to the acceptor end of tRNA(Ala). Also edits incorrectly charged Ser-tRNA(Ala) and Gly-tRNA(Ala) via its editing domain. This chain is Alanine--tRNA ligase, found in Lactococcus lactis subsp. cremoris (strain MG1363).